Here is an 80-residue protein sequence, read N- to C-terminus: Cytochrome c oxidase subunit 7B, mitochondrial (80 aa).

A mitochondrion-targeting transit peptide spans 1–24 (MFPLAKNALSRLRVQSIQQAVARQ). The Mitochondrial matrix segment spans residues 25–32 (IHQKRAPD). Residues 33-59 (FHDKYGNAVLASGATFCVAVWVYMATQ) traverse the membrane as a helical segment. The Mitochondrial intermembrane portion of the chain corresponds to 60–80 (IGIEWNPSPVGRVTPKEWREQ).

The protein belongs to the cytochrome c oxidase VIIb family. Component of the cytochrome c oxidase (complex IV, CIV), a multisubunit enzyme composed of 14 subunits. The complex is composed of a catalytic core of 3 subunits MT-CO1, MT-CO2 and MT-CO3, encoded in the mitochondrial DNA, and 11 supernumerary subunits COX4I1 (or COX4I2), COX5A, COX5B, COX6A2 (or COX6A1), COX6B1 (or COX6B2), COX6C, COX7A1 (or COX7A2), COX7B, COX7C, COX8B and NDUFA4, which are encoded in the nuclear genome. The complex exists as a monomer or a dimer and forms supercomplexes (SCs) in the inner mitochondrial membrane with NADH-ubiquinone oxidoreductase (complex I, CI) and ubiquinol-cytochrome c oxidoreductase (cytochrome b-c1 complex, complex III, CIII), resulting in different assemblies (supercomplex SCI(1)III(2)IV(1) and megacomplex MCI(2)III(2)IV(2)).

Its subcellular location is the mitochondrion inner membrane. Its pathway is energy metabolism; oxidative phosphorylation. Component of the cytochrome c oxidase, the last enzyme in the mitochondrial electron transport chain which drives oxidative phosphorylation. The respiratory chain contains 3 multisubunit complexes succinate dehydrogenase (complex II, CII), ubiquinol-cytochrome c oxidoreductase (cytochrome b-c1 complex, complex III, CIII) and cytochrome c oxidase (complex IV, CIV), that cooperate to transfer electrons derived from NADH and succinate to molecular oxygen, creating an electrochemical gradient over the inner membrane that drives transmembrane transport and the ATP synthase. Cytochrome c oxidase is the component of the respiratory chain that catalyzes the reduction of oxygen to water. Electrons originating from reduced cytochrome c in the intermembrane space (IMS) are transferred via the dinuclear copper A center (CU(A)) of subunit 2 and heme A of subunit 1 to the active site in subunit 1, a binuclear center (BNC) formed by heme A3 and copper B (CU(B)). The BNC reduces molecular oxygen to 2 water molecules using 4 electrons from cytochrome c in the IMS and 4 protons from the mitochondrial matrix. Plays a role in proper central nervous system (CNS) development in vertebrates. The sequence is that of Cytochrome c oxidase subunit 7B, mitochondrial (COX7B) from Bos taurus (Bovine).